Reading from the N-terminus, the 117-residue chain is MARAQLVLVALVAALLLAGPHTTMAAISCGQVNSAVSPCLSYARGGSGPSAACCSGVRSLNSAATTTADRRTACNCLKNVAGSISGLNAGNAASIPSKCGVSIPYTISPSIDCSSVN.

A signal peptide spans 1-25 (MARAQLVLVALVAALLLAGPHTTMA). 4 cysteine pairs are disulfide-bonded: Cys-29–Cys-76, Cys-39–Cys-53, Cys-54–Cys-99, and Cys-74–Cys-113.

Belongs to the plant LTP family. Expressed in roots, mesocotyls and developing leaves.

Plant non-specific lipid-transfer proteins transfer phospholipids as well as galactolipids across membranes. May play a role in wax or cutin deposition in the cell walls of expanding epidermal cells and certain secretory tissues. The sequence is that of Non-specific lipid-transfer protein 2B (LTP2-B) from Oryza sativa subsp. japonica (Rice).